Reading from the N-terminus, the 625-residue chain is Grainyhead-like protein 2 homolog (625 aa).

Disordered regions lie at residues 1–24, 82–112, and 428–453; these read MSQE…PPFN, VSKA…GGEN, and EERK…SDGK. A transcription activation region spans residues 1 to 93; sequence MSQESDNNKR…KASDSQEDQE (93 aa). 2 stretches are compositionally biased toward polar residues: residues 98–109 and 440–451; these read LGTSEAQSNLSG and QASQTQCNSSSD. The Grh/CP2 DB domain maps to 244 to 482; the sequence is SSGTFQYTLE…DLHSQPVLFI (239 aa).

This sequence belongs to the grh/CP2 family. Grainyhead subfamily. Homodimer, also forms heterodimers with GRHL1 or GRHL3. In terms of tissue distribution, expressed in keratinocytes (at protein level). Highly expressed in placenta, prostate, brain and kidney. Lower-level expression in a variety of epithelial tissues such as thymus, lung, salivary gland, mammary gland and digestive tract. Expressed in the cochlear. Expressed in corneal epithelial cells, but not in the endothelium or stroma.

Its subcellular location is the nucleus. It localises to the membrane. Its function is as follows. Transcription factor playing an important role in primary neurulation and in epithelial development. Binds directly to the consensus DNA sequence 5'-AACCGGTT-3' acting as an activator and repressor on distinct target genes. During embryogenesis, plays unique and cooperative roles with GRHL3 in establishing distinct zones of primary neurulation. Essential for closure 3 (rostral end of the forebrain), functions cooperatively with GRHL3 in closure 2 (forebrain/midbrain boundary) and posterior neuropore closure. Regulates epithelial morphogenesis acting as a target gene-associated transcriptional activator of apical junctional complex components. Up-regulates of CLDN3 and CLDN4, as well as of RAB25, which increases the CLDN4 protein and its localization at tight junctions. Comprises an essential component of the transcriptional machinery that establishes appropriate expression levels of CLDN4 and CDH1 in different types of epithelia. Exhibits functional redundancy with GRHL3 in epidermal morphogenetic events and epidermal wound repair. In lung, forms a regulatory loop with NKX2-1 that coordinates lung epithelial cell morphogenesis and differentiation. In keratinocytes, plays a role in telomerase activation during cellular proliferation, regulates TERT expression by binding to TERT promoter region and inhibiting DNA methylation at the 5'-CpG island, possibly by interfering with DNMT1 enzyme activity. In addition, impairs keratinocyte differentiation and epidermal function by inhibiting the expression of genes clustered at the epidermal differentiation complex (EDC) as well as GRHL1 and GRHL3 through epigenetic mechanisms. The chain is Grainyhead-like protein 2 homolog (GRHL2) from Homo sapiens (Human).